A 350-amino-acid polypeptide reads, in one-letter code: MMNTERPAGPLRPPHPPHPPRYLALAGPTASGKTAAALAIARVHEVEIISVDSALVYRGMDIGTAKPSAAELAAVPHHLIDIRDPLQAYSAAEFVADAQALIAAITARGRLPLLVGGTMLYFKALLEGLDPMPKADPATRALIATEAAEQGWPALHAALAEVDPVSAKRLHPADSQRIARALEVYRLSGQPLSSFQTTKLIATNEGVTGARGQKCLNIPENDRCLISLEPQNRAWLHQRIAERFDAMLAAGFIDEVRALRARGDLQADLPAMRCVGYRQAWQALDGLWPMSELRDKGICATRQLAKRQLTWLRSMPERRVVACDAPDALDQVLALARDFVNAGNKLQGQP.

A disordered region spans residues 1–20 (MMNTERPAGPLRPPHPPHPP). Pro residues predominate over residues 10-20 (PLRPPHPPHPP). 27-34 (GPTASGKT) serves as a coordination point for ATP. 29-34 (TASGKT) is a substrate binding site. 3 interaction with substrate tRNA regions span residues 52 to 55 (DSAL), 176 to 180 (QRIAR), and 273 to 278 (RCVGYR).

It belongs to the IPP transferase family. As to quaternary structure, monomer. The cofactor is Mg(2+).

The enzyme catalyses adenosine(37) in tRNA + dimethylallyl diphosphate = N(6)-dimethylallyladenosine(37) in tRNA + diphosphate. In terms of biological role, catalyzes the transfer of a dimethylallyl group onto the adenine at position 37 in tRNAs that read codons beginning with uridine, leading to the formation of N6-(dimethylallyl)adenosine (i(6)A). In Albidiferax ferrireducens (strain ATCC BAA-621 / DSM 15236 / T118) (Rhodoferax ferrireducens), this protein is tRNA dimethylallyltransferase.